Reading from the N-terminus, the 78-residue chain is FVLPGNNLVTPSAECCSSLSAVNTGCLCETINILSSLPANAAFHQSAAGIFDIGLYMEAKANETRWSLFSFPRVFLFE.

Belongs to the A9/FIL1 family. As to expression, tapetum of anthers.

It localises to the secreted. This is Protein M6 (M6) from Lilium henryi (Henry's lily).